Consider the following 373-residue polypeptide: uncharacterized protein (373 aa).

The protein belongs to the glycosyltransferase 28 family.

This is an uncharacterized protein from Bacillus subtilis (strain 168).